The following is a 221-amino-acid chain: Endonuclease segA (221 aa).

The 84-residue stretch at 8-91 folds into the GIY-YIG domain; the sequence is KYNYTYVITN…VVNDPMTYNL (84 aa). Residues 137–164 are disordered; that stretch reads KKQSEETKAKRKEALLNNPYGYNRNKPS. A compositionally biased stretch (basic and acidic residues) spans 138 to 150; the sequence is KQSEETKAKRKEA.

To endonucleases of group I introns of fungi and phage. The cofactor is Mg(2+).

Its function is as follows. Probably involved in the movement of the endonuclease-encoding DNA. The polypeptide is Endonuclease segA (segA) (Escherichia coli (Bacteriophage T4)).